A 353-amino-acid polypeptide reads, in one-letter code: Uroporphyrinogen decarboxylase (353 aa).

Substrate-binding positions include Arg29–Arg33, Asp79, Tyr156, Thr211, and His329.

The protein belongs to the uroporphyrinogen decarboxylase family. In terms of assembly, homodimer.

The protein resides in the cytoplasm. The catalysed reaction is uroporphyrinogen III + 4 H(+) = coproporphyrinogen III + 4 CO2. Its pathway is porphyrin-containing compound metabolism; protoporphyrin-IX biosynthesis; coproporphyrinogen-III from 5-aminolevulinate: step 4/4. Its function is as follows. Catalyzes the decarboxylation of four acetate groups of uroporphyrinogen-III to yield coproporphyrinogen-III. The sequence is that of Uroporphyrinogen decarboxylase from Alcanivorax borkumensis (strain ATCC 700651 / DSM 11573 / NCIMB 13689 / SK2).